The chain runs to 346 residues: UPF0283 membrane protein VIBHAR_01918 (346 aa).

Positions 1-17 (MSELKQKQVFKEKVMHS) are enriched in basic and acidic residues. A disordered region spans residues 1–28 (MSELKQKQVFKEKVMHSEEEDVSPELNT). Helical transmembrane passes span 73 to 93 (LFATFAGLVVWQAVDSVITAI) and 98 to 118 (WLALGWVGFITTIASFGLGAL).

This sequence belongs to the UPF0283 family.

It localises to the cell inner membrane. The sequence is that of UPF0283 membrane protein VIBHAR_01918 from Vibrio campbellii (strain ATCC BAA-1116).